The following is a 683-amino-acid chain: MAAAVAAPLAAGGEEAAATTSVPGSPGLPGRRSAERALEEAVATGTLNLSNRRLKHFPRGAARSYDLSDITQADLSRNRFPEVPEAACQLVSLEGLSLYHNCLRCLNPALGNLTALTYLNLSRNQLSLLPPYICQLPLRVLIVSNNKLGALPPDIGTLGSLRQLDVSSNELQSLPSELCGLSSLRDLNVRRNQLSTLPEELGDLPLVRLDFSCNRVSRIPVSFCRLRHLQVILLDSNPLQSPPAQVCLKGKLHIFKYLSTEAGQRGSALGDLAPSRPPSFSPCPAEDLFPGHRYDGGLDSGFHSVDSGSKRWSGNESTDEFSELSFRISELAREPRGPRERKEDGSADGDPVQIDFIDSHVPGEDEERGTVEEQRPPELSPGAGDRERAPSSRREEPAGEERRRPDTLQLWQERERRQQQQSGAWGAPRKDSLLKPGLRAVVGGAAAVSTQAMHNGSPKSSASQAGAAAGQGAPAPAPASQEPLPIAGPATAPAPRPLGSIQRPNSFLFRSSSQSGSGPSSPDSVLRPRRYPQVPDEKDLMTQLRQVLESRLQRPLPEDLAEALASGVILCQLANQLRPRSVPFIHVPSPAVPKLSALKARKNVESFLEACRKMGVPEADLCSPSDLLQGTARGLRTALEAVKRVGGKALPPLWPPSGLGGFVVFYVVLMLLLYVTYTRLLGS.

The span at 1–18 shows a compositional bias: low complexity; it reads MAAAVAAPLAAGGEEAAA. The segment at 1–34 is disordered; the sequence is MAAAVAAPLAAGGEEAAATTSVPGSPGLPGRRSA. LRR repeat units follow at residues 41 to 64, 67 to 90, 92 to 113, 114 to 136, 138 to 158, 159 to 181, 182 to 204, 206 to 226, and 227 to 250; these read AVAT…AARS, LSDI…ACQL, SLEG…LGNL, TALT…ICQL, LRVL…IGTL, GSLR…LCGL, SSLR…LGDL, LVRL…FCRL, and RHLQ…CLKG. A disordered region spans residues 268 to 292; sequence ALGDLAPSRPPSFSPCPAEDLFPGH. Phosphoserine is present on residues Ser-279, Ser-281, Ser-304, Ser-307, Ser-309, and Ser-313. Disordered regions lie at residues 326–436 and 449–539; these read FRIS…LLKP and STQA…DEKD. 3 stretches are compositionally biased toward basic and acidic residues: residues 330-345, 357-376, and 384-418; these read ELAR…KEDG, IDSH…EQRP, and GDRE…ERRQ. Ser-432 and Ser-457 each carry phosphoserine. Positions 449 to 460 are enriched in polar residues; that stretch reads STQAMHNGSPKS. Low complexity-rich tracts occupy residues 461 to 481 and 511 to 524; these read SASQ…PASQ and SSSQ…SPDS. Phosphoserine occurs at positions 511, 513, 517, 521, and 589. The 114-residue stretch at 534–647 folds into the Calponin-homology (CH) domain; the sequence is VPDEKDLMTQ…ALEAVKRVGG (114 aa). Residues 653–673 traverse the membrane as a helical segment; that stretch reads LWPPSGLGGFVVFYVVLMLLL.

It is found in the cell membrane. Accessory protein that regulates signaling by multiple TLRs, acting as a broad-spanning regulator of the innate immune response. In macrophages, binds LPS and promotes proper docking of LPS in lipid raft membrane. May be required for lipid raft maintenance. This is Leucine-rich repeat and calponin homology domain-containing protein 4 from Homo sapiens (Human).